The sequence spans 652 residues: Carboxypeptidase Z (652 aa).

Positions 1-20 are cleaved as a signal peptide; it reads MPTTPLLLAALAALAALAVA. One can recognise an FZ domain in the interval 41 to 163; it reads THSATCVDLH…APEEEGCYDP (123 aa). Disulfide bonds link C46–C112, C54–C105, C96–C132, C121–C160, and C125–C149. An N-linked (GlcNAc...) asparagine glycan is attached at N60. The Peptidase M14 domain occupies 189–505; it reads AHHSYAQMVR…EPLLNFLEMV (317 aa). Residues H251 and E254 each contribute to the Zn(2+) site. An N-linked (GlcNAc...) asparagine glycan is attached at N284. Zn(2+) is bound at residue H383. The Proton donor/acceptor role is filled by E475. Residues 594–628 form a disordered region; it reads FLPGPSRALPRSLDPQGAPAQLDFEPPRARRQPAS.

Belongs to the peptidase M14 family. The cofactor is Zn(2+). As to expression, abundantly expressed in the placenta, with low to moderate levels in the brain, lung, thymus and kidney.

The protein resides in the secreted. It is found in the extracellular space. It localises to the extracellular matrix. With respect to regulation, inhibited by 2-mercaptomethyl-3-guanidinoethylthiopropanoic acid (MGTA) and guanidinoethylmercaptosuccinic acid (GEMSA). Inhibited by chelating agents such as EDTA and EGTA. Functionally, cleaves substrates with C-terminal arginine residues. Probably modulates the Wnt signaling pathway, by cleaving some undefined protein. May play a role in cleavage during prohormone processing. The chain is Carboxypeptidase Z (Cpz) from Rattus norvegicus (Rat).